A 455-amino-acid chain; its full sequence is UDP-glycosyltransferase 75B2 (455 aa).

Residue histidine 16 is the Proton acceptor of the active site. Histidine 16 is an an anthocyanidin binding site. Glutamine 337, histidine 352, tryptophan 355, serine 357, glutamate 360, aspartate 376, and glutamine 377 together coordinate UDP-alpha-D-glucose.

Belongs to the UDP-glycosyltransferase family.

The enzyme catalyses (indol-3-yl)acetate + UDP-alpha-D-glucose = 1-O-(indol-3-ylacetyl)-beta-D-glucose + UDP. It participates in plant hormone metabolism; auxin conjugation. Its function is as follows. Possesses low catalytic activity in vitro. Also active as glucosyltransferase in vitro on benzoates and benzoate derivatives. This Arabidopsis thaliana (Mouse-ear cress) protein is UDP-glycosyltransferase 75B2 (UGT75B2).